The following is a 314-amino-acid chain: Nodulation protein D 1 (314 aa).

The 58-residue stretch at Leu-6–Thr-63 folds into the HTH lysR-type domain. Residues Leu-23 to Ala-42 constitute a DNA-binding region (H-T-H motif).

It belongs to the LysR transcriptional regulatory family.

Its function is as follows. NodD regulates the expression of the nodABCFE genes which encode other nodulation proteins. NodD is also a negative regulator of its own expression. Binds flavonoids as inducers. This Bradyrhizobium sp. (strain NC92) protein is Nodulation protein D 1 (nodD1).